A 90-amino-acid polypeptide reads, in one-letter code: Small ribosomal subunit protein uS19 (90 aa).

The protein belongs to the universal ribosomal protein uS19 family.

Its function is as follows. Protein S19 forms a complex with S13 that binds strongly to the 16S ribosomal RNA. In Clostridium beijerinckii (strain ATCC 51743 / NCIMB 8052) (Clostridium acetobutylicum), this protein is Small ribosomal subunit protein uS19.